The following is a 318-amino-acid chain: Strigolactone esterase D14 (318 aa).

Pro residues predominate over residues M1–S11. The interval M1–S48 is disordered. The span at V36–G47 shows a compositional bias: gly residues. S147 functions as the Nucleophile in the catalytic mechanism. The substrate site is built by S147 and C241. Residues D268 and H297 contribute to the active site. H297 serves as a coordination point for substrate.

It belongs to the AB hydrolase superfamily. In terms of assembly, interacts with D53. The interaction between D53 and D14 is enhanced in the presence of strigolactones. The interaction with D53 occurs in the presence of (2'R) stereoisomers of strigolactones, but not (2'S) stereoisomers. Interacts with SLR1 in a strigolactone-dependent manner. Interacts with D3 in a strigolactone-dependent manner. Expressed in the parenchyma cells of the root stele and lateral roots, vascular tissues of vein and leaf sheath, ligule base, auricle base and stem base.

It is found in the cytoplasm. The protein resides in the nucleus. Functionally, involved in strigolactone (SL) signaling pathway. May function downstream of SL synthesis, as a component of hormone signaling or as an enzyme that participates in the conversion of SL to the bioactive form. Strigolactones are hormones that inhibit tillering and shoot branching through the MAX-dependent pathway, contribute to the regulation of shoot architectural response to phosphate-limiting conditions and function as rhizosphere signal that stimulates hyphal branching of arbuscular mycorrhizal fungi and trigger seed germination of root parasitic weeds. Strigolactone-dependent association of D14 with D3 and D53 (a repressor of SL signaling) triggers D53 ubiquitination and degradation. Hydrolyzes the butenolide ring of SLs. A reaction product D-OH is trapped in the cavity of D14, inducing the interaction with SLR1, and probably with other proteins such as D3 and D53. Contributes to the negative regulation of gibberellin signaling. The protein is Strigolactone esterase D14 of Oryza sativa subsp. japonica (Rice).